The primary structure comprises 31 residues: Cytochrome b6-f complex subunit 6 (31 aa).

Residues 4–26 form a helical membrane-spanning segment; the sequence is LTSYFGFLLAALTITSALFIGLS.

The protein belongs to the PetL family. The 4 large subunits of the cytochrome b6-f complex are cytochrome b6, subunit IV (17 kDa polypeptide, PetD), cytochrome f and the Rieske protein, while the 4 small subunits are PetG, PetL, PetM and PetN. The complex functions as a dimer.

Its subcellular location is the plastid. It localises to the chloroplast thylakoid membrane. Its function is as follows. Component of the cytochrome b6-f complex, which mediates electron transfer between photosystem II (PSII) and photosystem I (PSI), cyclic electron flow around PSI, and state transitions. PetL is important for photoautotrophic growth as well as for electron transfer efficiency and stability of the cytochrome b6-f complex. The protein is Cytochrome b6-f complex subunit 6 of Aethionema grandiflorum (Persian stone-cress).